The following is an 85-amino-acid chain: MTSVQSVTCCCLLWLMLSVQPITPGSPGPAQLSRERSFKFLSGGFKEIVCHRYCAKGIAKEFCNCPDKRDVVSPRIRRRKRSKAM.

The signal sequence occupies residues 1-24; it reads MTSVQSVTCCCLLWLMLSVQPITP. The propeptide occupies 25 to 38; that stretch reads GSPGPAQLSRERSF. Position 47 is a 4-carboxyglutamate (E47). D67 bears the Aspartic acid 1-amide mark. Positions 68 to 85 are excised as a propeptide; it reads KRDVVSPRIRRRKRSKAM.

This sequence belongs to the conotoxin J superfamily. Post-translationally, contains 2 disulfide bonds. As to expression, expressed by the venom duct.

The protein localises to the secreted. Functionally, causes scratching in mice. The polypeptide is Scratcher peptide (Conus geographus (Geography cone)).